A 147-amino-acid polypeptide reads, in one-letter code: HTH-type transcriptional regulator MgrA (147 aa).

The HTH marR-type domain occupies 8–139; it reads KEQLCFSLYN…LNRLLGKVIH (132 aa). A DNA-binding region (H-T-H motif) is located at residues 55–78; the sequence is VKKVVTELALDTGTVSPLLKRMEQ.

The protein localises to the cytoplasm. Functionally, regulatory protein involved in autolytic activity, multidrug resistance and virulence. Controls autolysis by inactivating LytM, LytN (autolysins) and SarV (autolysis activator) and activating ArlRS, LrgAB and LytSR (autolysis inhibitors). Acts as a dual regulator for resistance to multiple drugs by inactivating NorB and tet38 and activating NorA. Positively controls the expression of virulence accessory gene regulator (agr) to promote alpha-hemolysin (hla) transcription and down-regulates staphylococcal accessory regulator (sarS), leading to repression of surface protein A (spa). Binds directly to hla promoter to augment its activation. Binds to sarS promoter to down-regulate spa expression. In Staphylococcus aureus (strain NCTC 8325 / PS 47), this protein is HTH-type transcriptional regulator MgrA (mgrA).